The following is a 291-amino-acid chain: MSTKNHFIFPTYVQMYPYSKDRPFLKQVREKLRYYGYKWLYQKQCSQLVDFLNTETQWQSLFTQDYYRTNTILTTFCDKRFSASERLTAITENLRLAEEKMGRSLCQQLLDQQHIVLTQLTEDLRLSLSINHIDPFEGYFSINIRNQNNERVYDSSFTFLSPNKLLIASIQGPSSDNAQELVKQATKALHGMRPMFMLVNGFKMLAEKWQCELVGIPHKAQGKYRLSARSKILFNYDEFWQENQGEYRHNYWQLPLHIERKQLEDIASKKRSMYRKRYEMLDQMALDIQQL.

This is an uncharacterized protein from Haemophilus influenzae (strain ATCC 51907 / DSM 11121 / KW20 / Rd).